The sequence spans 184 residues: Ribosome-recycling factor (184 aa).

Belongs to the RRF family.

Its subcellular location is the cytoplasm. Functionally, responsible for the release of ribosomes from messenger RNA at the termination of protein biosynthesis. May increase the efficiency of translation by recycling ribosomes from one round of translation to another. The chain is Ribosome-recycling factor from Lachnoclostridium phytofermentans (strain ATCC 700394 / DSM 18823 / ISDg) (Clostridium phytofermentans).